We begin with the raw amino-acid sequence, 243 residues long: Pyridoxine 5'-phosphate synthase (243 aa).

Asparagine 9 serves as a coordination point for 3-amino-2-oxopropyl phosphate. 11–12 lines the 1-deoxy-D-xylulose 5-phosphate pocket; the sequence is DH. Residue arginine 20 coordinates 3-amino-2-oxopropyl phosphate. Residue histidine 45 is the Proton acceptor of the active site. 1-deoxy-D-xylulose 5-phosphate is bound by residues arginine 47 and histidine 52. Glutamate 72 functions as the Proton acceptor in the catalytic mechanism. 1-deoxy-D-xylulose 5-phosphate is bound at residue threonine 102. The active-site Proton donor is the histidine 193. Residues glycine 194 and 215 to 216 each bind 3-amino-2-oxopropyl phosphate; that span reads GH.

Belongs to the PNP synthase family. In terms of assembly, homooctamer; tetramer of dimers.

It is found in the cytoplasm. The enzyme catalyses 3-amino-2-oxopropyl phosphate + 1-deoxy-D-xylulose 5-phosphate = pyridoxine 5'-phosphate + phosphate + 2 H2O + H(+). It functions in the pathway cofactor biosynthesis; pyridoxine 5'-phosphate biosynthesis; pyridoxine 5'-phosphate from D-erythrose 4-phosphate: step 5/5. Functionally, catalyzes the complicated ring closure reaction between the two acyclic compounds 1-deoxy-D-xylulose-5-phosphate (DXP) and 3-amino-2-oxopropyl phosphate (1-amino-acetone-3-phosphate or AAP) to form pyridoxine 5'-phosphate (PNP) and inorganic phosphate. The protein is Pyridoxine 5'-phosphate synthase of Escherichia coli O157:H7.